The primary structure comprises 179 residues: MEKEREDEETEGRERPEPLTDVERGIIKDTWARVYASCEDVGVTILIRFFVNFPSAKQYFSQFQDMEDPEEMEKSSQLRKHARRVMNAINTVVENLHDPEKVSSVLVLVGKAHAFKYKVEPIYFKILSGVILEILAEEFGECFTPEVQTSWSKLMAALYWHITGAYTEVGWVKLSSSAV.

A compositionally biased stretch (acidic residues) spans 1–11 (MEKEREDEETE). The disordered stretch occupies residues 1 to 20 (MEKEREDEETEGRERPEPLT). The Globin domain maps to 18 to 167 (PLTDVERGII…LYWHITGAYT (150 aa)). 2 residues coordinate heme b: histidine 81 and histidine 113.

The protein belongs to the globin family. Monomeric. As to expression, expressed in all tissues examined, with highest levels in brain and eye, and considerably lower levels in skin, gut, heart, gill, liver and muscle.

It is found in the cytoplasm. The protein localises to the nucleus. It catalyses the reaction Fe(II)-heme b-[protein] + nitric oxide + O2 = Fe(III)-heme b-[protein] + nitrate. The catalysed reaction is Fe(III)-heme b-[protein] + nitric oxide + H2O = Fe(II)-heme b-[protein] + nitrite + 2 H(+). It carries out the reaction 2 superoxide + 2 H(+) = H2O2 + O2. The enzyme catalyses H2O2 + AH2 = A + 2 H2O. Probable multifunctional globin with a hexacoordinated heme iron required for the catalysis of various reactions depending on redox condition of the cell as well as oxygen availability. Has a nitric oxide dioxygenase (NOD) activity and is most probably involved in cell-mediated and oxygen-dependent nitric oxide consumption. Under normoxic conditions functions as a nitric oxide dioxygenase (NOD) but under hypoxic conditions the globin may switch its function to that of a nitrite (NO2) reductase (NiR), generating nitric oxide. Could also have peroxidase and superoxide dismutase activities, detoxifying reactive oxygen species and protecting cells against oxidative stress. Also binds dioxygen with low affinity and could function as an oxygen sensor but has probably no function as a respiratory oxygen carrier. The polypeptide is Cytoglobin-2 (Danio rerio (Zebrafish)).